Reading from the N-terminus, the 71-residue chain is Putative membrane protein insertion efficiency factor (71 aa).

This sequence belongs to the UPF0161 family.

It localises to the cell membrane. Functionally, could be involved in insertion of integral membrane proteins into the membrane. In Clostridium acetobutylicum (strain ATCC 824 / DSM 792 / JCM 1419 / IAM 19013 / LMG 5710 / NBRC 13948 / NRRL B-527 / VKM B-1787 / 2291 / W), this protein is Putative membrane protein insertion efficiency factor.